The primary structure comprises 490 residues: Probable cytosol aminopeptidase (490 aa).

The Mn(2+) site is built by K262 and D267. The active site involves K274. Positions 285, 344, and 346 each coordinate Mn(2+). R348 is a catalytic residue.

It belongs to the peptidase M17 family. Mn(2+) serves as cofactor.

It is found in the cytoplasm. The enzyme catalyses Release of an N-terminal amino acid, Xaa-|-Yaa-, in which Xaa is preferably Leu, but may be other amino acids including Pro although not Arg or Lys, and Yaa may be Pro. Amino acid amides and methyl esters are also readily hydrolyzed, but rates on arylamides are exceedingly low.. It catalyses the reaction Release of an N-terminal amino acid, preferentially leucine, but not glutamic or aspartic acids.. Functionally, presumably involved in the processing and regular turnover of intracellular proteins. Catalyzes the removal of unsubstituted N-terminal amino acids from various peptides. This chain is Probable cytosol aminopeptidase, found in Xanthomonas oryzae pv. oryzae (strain MAFF 311018).